The following is a 135-amino-acid chain: Small ribosomal subunit protein uS12 (135 aa).

The segment at 1–29 is disordered; that stretch reads MPTINQLVRKGREKVEKKSKAPALQGNPQ. Asp89 carries the 3-methylthioaspartic acid modification. Positions 106–135 are disordered; that stretch reads GVKDRKQSRSKYGAKRPKPGQAAATTGKKK. Positions 113–123 are enriched in basic residues; that stretch reads SRSKYGAKRPK.

It belongs to the universal ribosomal protein uS12 family. In terms of assembly, part of the 30S ribosomal subunit. Contacts proteins S8 and S17. May interact with IF1 in the 30S initiation complex.

Its function is as follows. With S4 and S5 plays an important role in translational accuracy. Functionally, interacts with and stabilizes bases of the 16S rRNA that are involved in tRNA selection in the A site and with the mRNA backbone. Located at the interface of the 30S and 50S subunits, it traverses the body of the 30S subunit contacting proteins on the other side and probably holding the rRNA structure together. The combined cluster of proteins S8, S12 and S17 appears to hold together the shoulder and platform of the 30S subunit. This is Small ribosomal subunit protein uS12 from Sulfurihydrogenibium sp. (strain YO3AOP1).